We begin with the raw amino-acid sequence, 105 residues long: Large ribosomal subunit protein uL24 (105 aa).

The protein belongs to the universal ribosomal protein uL24 family. As to quaternary structure, part of the 50S ribosomal subunit.

In terms of biological role, one of two assembly initiator proteins, it binds directly to the 5'-end of the 23S rRNA, where it nucleates assembly of the 50S subunit. One of the proteins that surrounds the polypeptide exit tunnel on the outside of the subunit. This is Large ribosomal subunit protein uL24 from Halorhodospira halophila (strain DSM 244 / SL1) (Ectothiorhodospira halophila (strain DSM 244 / SL1)).